We begin with the raw amino-acid sequence, 884 residues long: MSGVNEIRSSFIDYFVKEGHEAVASSPLVPQNDPTLMFTNAGMVQFKNVFTGVEKRPYSRAATSQKCVRAGGKHNDLDNVGYTARHHTFFEMLGNFSFGDYFKDRAIELAWNLVTRTFELPRDRLVVTVFSEDEEAYGLWKKIAGLSDDKIIRIPTSDNFWSMGDTGPCGPCSEIFFDHGPNVPGGPPGSPDQDGDRFIEIWNLVFMQFEQLPGGERLALPRPSIDTGMGLERVSAVLQGVHDNYDTDLMRALIAEVAELTSVNPDGPQKASHRVIADHLRASVFLTADGVLPSNEGRGYVLRRIMRRAMRHAQLLGAKDPLMHRLVPVLVREMGRAYPEIVRAESLAEETLLLEETRFRRTLERGLSILEEESTGLTSGGQFPGEVAFKLYDTYGFPLDLTQDALRARGISVDTTAFDAAMARQKAEARASWAGSGEAATDTLWFSVRDEVGATEFLGYETEKAEGVVAALVRDGAVVDSLAAGEKGLVILNQTPFYAESGGQVGDIGRVSGEGGVAAQVVATQKKLGDLFVHEVKVETGTLKRGTALVLEVDHARRAAVRANHSATHLLHEALRRVLGDHVAQKGSLVAPDRLRFDFSHPKPLSGGELAEVETIANRFVLRNEPVETRIMAVDDAITSGARALFGEKYGDEVRVVSMGTDDGNGAPYSVELCGGTHVKRTGDIGLISVLSESAVASGVRRIEALTADAARRHLNAASAALAGTAAVLKAPVAEVEARVATLVEERRRLERELAEARKKLAMGGGGEASGDAVRTVGDIKLLARRVEGIEIKDLKGLVDEGKKQIGSGVVAIVGVTSDGKAGIVVGVTADLIARFDAVALVRVGSEALGGKGGGGRPDMAQAGGPDGAKAEAALDAIAAAMAG.

The Zn(2+) site is built by histidine 565, histidine 569, cysteine 674, and histidine 678.

Belongs to the class-II aminoacyl-tRNA synthetase family. Requires Zn(2+) as cofactor.

It localises to the cytoplasm. The enzyme catalyses tRNA(Ala) + L-alanine + ATP = L-alanyl-tRNA(Ala) + AMP + diphosphate. Functionally, catalyzes the attachment of alanine to tRNA(Ala) in a two-step reaction: alanine is first activated by ATP to form Ala-AMP and then transferred to the acceptor end of tRNA(Ala). Also edits incorrectly charged Ser-tRNA(Ala) and Gly-tRNA(Ala) via its editing domain. The chain is Alanine--tRNA ligase from Xanthobacter autotrophicus (strain ATCC BAA-1158 / Py2).